A 175-amino-acid polypeptide reads, in one-letter code: RNA pyrophosphohydrolase (175 aa).

The Nudix hydrolase domain occupies 6–149; sequence GYRPNVGIVI…KRDVYRRVMK (144 aa). The Nudix box signature appears at 38–59; the sequence is GGINPGETAEQAMYRELFEEVG.

Belongs to the Nudix hydrolase family. RppH subfamily. It depends on a divalent metal cation as a cofactor.

In terms of biological role, accelerates the degradation of transcripts by removing pyrophosphate from the 5'-end of triphosphorylated RNA, leading to a more labile monophosphorylated state that can stimulate subsequent ribonuclease cleavage. The polypeptide is RNA pyrophosphohydrolase (Erwinia tasmaniensis (strain DSM 17950 / CFBP 7177 / CIP 109463 / NCPPB 4357 / Et1/99)).